The primary structure comprises 348 residues: Rhodopsin (348 aa).

Position 1 is an N-acetylmethionine (M1). Topologically, residues 1–36 (MNGTEGPNFYVPFSNKTGVVRSPFEYPQYYLAEPWQ) are extracellular. N-linked (GlcNAc...) asparagine glycans are attached at residues N2 and N15. The helical transmembrane segment at 37–61 (FSMLAAYMFLLIVLGFPINFLTLYV) threads the bilayer. Topologically, residues 62–73 (TVQHKNVRTPLN) are cytoplasmic. A helical transmembrane segment spans residues 74–96 (YILLNLAVANHFMVFGGFTTTLY). Over 97–110 (TSLHGYFVFGSTGC) the chain is Extracellular. C110 and C187 form a disulfide bridge. A helical membrane pass occupies residues 111 to 133 (NLEGFFATLGGEIALWSLVVLAI). The 'Ionic lock' involved in activated form stabilization signature appears at 134 to 136 (ERY). Residues 134–152 (ERYVVVCKPMSNFRFGENH) lie on the Cytoplasmic side of the membrane. Residues 153-173 (AIMGVAFTWVMALACAAPPLV) traverse the membrane as a helical segment. Residues 174 to 202 (GWSRYIPEGMQCSCGIDYYTLKPEVNNES) lie on the Extracellular side of the membrane. E201 lines the Zn(2+) pocket. The helical transmembrane segment at 203 to 224 (FVIYMFVVHFTIPMTIIFFCYG) threads the bilayer. Residues 225–252 (QLVFTVKEAAAQQQESATTQKAEKEVTR) lie on the Cytoplasmic side of the membrane. Residues 253–274 (MVIIMVIAFLICWVPYASVAFY) form a helical membrane-spanning segment. Over 275 to 286 (IFTHQGSDFGPI) the chain is Extracellular. Q279 lines the Zn(2+) pocket. A helical transmembrane segment spans residues 287-308 (LMTLPAFFAKSSAIYNPVIYIM). At K296 the chain carries N6-(retinylidene)lysine. The Cytoplasmic segment spans residues 309 to 348 (MNKQFRNCMLTTICCGKNPFGEEEGSTTASKTETSQVAPA). Residues C322 and C323 are each lipidated (S-palmitoyl cysteine). Residues 330-348 (EEEGSTTASKTETSQVAPA) form an interaction with SAG region. At S334 the chain carries Phosphoserine. 2 positions are modified to phosphothreonine: T335 and T336. Position 338 is a phosphoserine (S338). Phosphothreonine is present on residues T340 and T342. S343 carries the post-translational modification Phosphoserine.

The protein belongs to the G-protein coupled receptor 1 family. Opsin subfamily. As to quaternary structure, homodimer. May form a complex composed of RHO, GRK1 and RCVRN in a Ca(2+)-dependent manner; RCVRN prevents the interaction between GRK1 and RHO. Interacts with GRK1. Interacts (phosphorylated form) with SAG. Interacts with GNAT1. Interacts with GNAT3. SAG and G-proteins compete for a common binding site. Interacts with PRCD; the interaction promotes PRCD stability. Forms a complex with ASAP1 and ARF4. Forms a complex with ASAP1, RAB11A, Rabin8/RAB3IP, ARF4 and RAB11FIP3; the complex regulates Golgi-to-cilia rhodopsin/RHO transport in photoreceptors. Post-translationally, phosphorylated on some or all of the serine and threonine residues present in the C-terminal region. In terms of processing, contains one covalently linked retinal chromophore. Upon light absorption, the covalently bound 11-cis-retinal is converted to all-trans-retinal. After hydrolysis of the Schiff base and release of the covalently bound all-trans-retinal, active rhodopsin is regenerated by binding of a fresh molecule of 11-cis-retinal.

The protein localises to the membrane. The protein resides in the cell projection. Its subcellular location is the cilium. It localises to the photoreceptor outer segment. In terms of biological role, photoreceptor required for image-forming vision at low light intensity. Required for photoreceptor cell viability after birth. Light-induced isomerization of 11-cis to all-trans retinal triggers a conformational change that activates signaling via G-proteins. Subsequent receptor phosphorylation mediates displacement of the bound G-protein alpha subunit by the arrestin SAG and terminates signaling. The chain is Rhodopsin (RHO) from Loxodonta africana (African elephant).